A 447-amino-acid polypeptide reads, in one-letter code: Glutamine synthetase (447 aa).

The GS beta-grasp domain maps to Arg20–Gly105. Residues Pro112–Leu447 form the GS catalytic domain. Positions 135 and 137 each coordinate Mg(2+). Glu187 provides a ligand contact to ATP. 2 residues coordinate Mg(2+): Glu192 and Glu199. Residues Asn243–Gly244 and Gly244 each bind L-glutamate. His248 is a Mg(2+) binding site. Ser252 is a binding site for ATP. Residues Arg301, Glu307, and Arg319 each coordinate L-glutamate. ATP is bound by residues Arg319 and Arg324. Glu336 lines the Mg(2+) pocket. Arg338 is an L-glutamate binding site.

This sequence belongs to the glutamine synthetase family. Homohexamer. Interacts and forms stable complexes with the regulatory protein GlnK1. The cofactor is Mg(2+).

It is found in the cytoplasm. The enzyme catalyses L-glutamate + NH4(+) + ATP = L-glutamine + ADP + phosphate + H(+). Its activity is regulated as follows. Directly stimulated by the effector molecule 2-oxoglutarate. Inhibited by GlnK1. 2-oxoglutarate antagonizes the inhibitory effects of GlnK1, but does not prevent GlnK1/GlnA1 complex formation. Probably involved in nitrogen metabolism via ammonium assimilation. Catalyzes the ATP-dependent biosynthesis of glutamine from glutamate and ammonia. The protein is Glutamine synthetase of Methanosarcina mazei (strain ATCC BAA-159 / DSM 3647 / Goe1 / Go1 / JCM 11833 / OCM 88) (Methanosarcina frisia).